Reading from the N-terminus, the 421-residue chain is Trimethyllysine dioxygenase, mitochondrial (421 aa).

The transit peptide at 1-15 (MWYHKLLHQQSRLQN) directs the protein to the mitochondrion. 2 positions are modified to N6-acetyllysine: Lys179 and Lys236. Fe cation contacts are provided by His242, Asp244, and His389.

Belongs to the gamma-BBH/TMLD family. In terms of assembly, homodimer. Requires Fe(2+) as cofactor. It depends on L-ascorbate as a cofactor.

It localises to the mitochondrion matrix. It catalyses the reaction N(6),N(6),N(6)-trimethyl-L-lysine + 2-oxoglutarate + O2 = (3S)-3-hydroxy-N(6),N(6),N(6)-trimethyl-L-lysine + succinate + CO2. Its pathway is amine and polyamine biosynthesis; carnitine biosynthesis. Converts trimethyllysine (TML) into hydroxytrimethyllysine (HTML). The protein is Trimethyllysine dioxygenase, mitochondrial (Tmlhe) of Rattus norvegicus (Rat).